A 332-amino-acid chain; its full sequence is DGAT1/2-independent enzyme synthesizing storage lipids (332 aa).

Residues 1–10 (MIGSNESSTE) lie on the Lumenal side of the membrane. Asn-5 carries N-linked (GlcNAc...) asparagine glycosylation. A helical membrane pass occupies residues 11–31 (GPIPTSYLSFLAYLLGEWTGV). The Cytoplasmic segment spans residues 32–45 (EHTEDYLSYGAYLS). The chain crosses the membrane as a helical span at residues 46-66 (WVLFPLAIVFILPVAIFFFCF). Topologically, residues 67–332 (NTSLLLLHIY…ERFQTRQKED (266 aa)) are lumenal. The active site involves His-132. N-linked (GlcNAc...) asparagine glycosylation occurs at Asn-289.

This sequence belongs to the diacylglycerol acyltransferase family. Highly divergent.

The protein localises to the endoplasmic reticulum membrane. It catalyses the reaction a 1,2-diacylglycerol + a 1,2-diacyl-sn-glycero-3-phosphocholine = a triacylglycerol + a 1-acyl-sn-glycero-3-phosphocholine. The catalysed reaction is a 1-O-alkyl-2-acyl-sn-glycero-3-phosphocholine + a 1,2-diacylglycerol = a 1-O-alkyl-sn-glycero-3-phosphocholine + a triacylglycerol. The enzyme catalyses a 2-acylglycerol + an acyl-CoA = a 1,2-diacylglycerol + CoA. It carries out the reaction an acyl-CoA + a 1,2-diacyl-sn-glycerol = a triacyl-sn-glycerol + CoA. It catalyses the reaction 2-(9Z-octadecenoyl)-glycerol + (9Z)-octadecenoyl-CoA = 1,2-di-(9Z-octadecenoyl)-glycerol + CoA. The catalysed reaction is 1,2-di-(9Z-octadecenoyl)-sn-glycerol + (9Z)-octadecenoyl-CoA = 1,2,3-tri-(9Z-octadecenoyl)-glycerol + CoA. Catalytic subunit of the alternative triglyceride biosynthesis pathway, which mediates formation of triacylglycerol from diacylglycerol and membrane phospholipids. Synthesizes triacylglycerol at the expense of membrane phospholipids, such as phosphatidylcholine (PC) and its ether-linked form (ePC), thereby altering the composition of membranes. The alternative triglyceride biosynthesis pathway is probably required to provide the energy required for rapid growth when fuel sources are limiting. It maintains mitochondrial function during periods of extracellular lipid starvation. Can also use acyl-CoA as donor: acts as a acyl-CoA:monoacylglycerol acyltransferase (MGAT), but also shows acyl-CoA:diacylglycerol acyltransferase (DGAT) activity. The sequence is that of DGAT1/2-independent enzyme synthesizing storage lipids (TMEM68) from Gallus gallus (Chicken).